The following is a 229-amino-acid chain: Large ribosomal subunit protein uL1 (229 aa).

It belongs to the universal ribosomal protein uL1 family. Part of the 50S ribosomal subunit.

Its function is as follows. Binds directly to 23S rRNA. The L1 stalk is quite mobile in the ribosome, and is involved in E site tRNA release. Protein L1 is also a translational repressor protein, it controls the translation of the L11 operon by binding to its mRNA. The protein is Large ribosomal subunit protein uL1 of Leifsonia xyli subsp. xyli (strain CTCB07).